The sequence spans 131 residues: uncharacterized protein (131 aa).

This is an uncharacterized protein from Bacillus subtilis (strain 168).